A 344-amino-acid chain; its full sequence is tRNA N6-adenosine threonylcarbamoyltransferase (344 aa).

Fe cation is bound by residues His110 and His114. Substrate-binding positions include 133 to 137 (AVSGA), Asp166, Gly179, and Asn278. Asp303 contacts Fe cation.

This sequence belongs to the KAE1 / TsaD family. It depends on Fe(2+) as a cofactor.

The protein localises to the cytoplasm. The enzyme catalyses L-threonylcarbamoyladenylate + adenosine(37) in tRNA = N(6)-L-threonylcarbamoyladenosine(37) in tRNA + AMP + H(+). In terms of biological role, required for the formation of a threonylcarbamoyl group on adenosine at position 37 (t(6)A37) in tRNAs that read codons beginning with adenine. Is involved in the transfer of the threonylcarbamoyl moiety of threonylcarbamoyl-AMP (TC-AMP) to the N6 group of A37, together with TsaE and TsaB. TsaD likely plays a direct catalytic role in this reaction. The chain is tRNA N6-adenosine threonylcarbamoyltransferase from Chlamydia caviae (strain ATCC VR-813 / DSM 19441 / 03DC25 / GPIC) (Chlamydophila caviae).